The chain runs to 950 residues: MLSSWQGGPRPRQLLLWLLILAAWETGSGQLHYSVPEEAKHGTFVGRIAQDLGLELAELVPRLFRVASKTHGDLLEVNLQNGILFVNSRIDREELCGRSAECSVHLEVIVDRPLQVFHVEVKVRDINDNPPIFPESKKRIIVAESRPPETRFPLDGASDADIGVNSALTYRLDPNDYFTLDAQNSLEQMSSLSLVLRKTLDREEIQEHSLLLTASDGGKPELTGTVQLLITILDVNDNAPEFYQSVYKVTVLENAFNGTLVIKLNATDPDDGTNGDIVYSFRRPVSPAVVYAFTINPNNGEIRTKGKLDFEEKKLYEISVEAVDKGNIPMAGHCTLLVEVLDVNDNAPEVTITSLSLPIREDTQPSAIIALISVSDRDSGSNGQVTCTLTPHVPFKLVSTYKNYYSLVLDSALDRESVSAYELVVTARDGGSPSLWATASVSVGVADVNDNAPAFAQPEYTVFVKENNPPGCHIFTVSAQDADAQENALVSYSLVERRVGERALSSYVSVHAESGKVYALQPLDHEELELLQFQVSARDSGVPPLGSNVTLQVFVLDENDNAPALLTPGAGSAGGTVSELMPRSVGAGHVVVKVRAVDADSGYNAWLSYELQLAAVGARIPFCVGLYTGEISTTRPLDEVDAPHHRLLVLVKDHGEPALTATATVLLSLVESGQAPQASSRASAGAVGPEAALVDVNVYLIIAICAVSSLLVLTLLLYTALRCSAPPTEGVCAPGKPTLVCSSAAGSWSYSQQRRPRVCSGEGPHKTDLMAFSPSLPPCLGSAEGTGQREEDSEGLKEPRQPNPDWRYSASLRAGMHSSVHLEEAGILRAGPGGPDQQWPTVSSATPEPEAGEVSPPVGAGVNSNSWTFKYGPGNPKQSGPGELPDKFIIPGSPAIISIRQEPANSQIDKSDFITFGKKEETKKKKKKKKGNKTQEKKEKGNSTTDNSDQ.

The signal sequence occupies residues 1–29; that stretch reads MLSSWQGGPRPRQLLLWLLILAAWETGSG. Residues 30–697 lie on the Extracellular side of the membrane; it reads QLHYSVPEEA…GPEAALVDVN (668 aa). 6 consecutive Cadherin domains span residues 34-133, 134-242, 243-350, 351-455, 456-565, and 581-678; these read SVPE…PPIF, PESK…APEF, YQSV…APEV, TITS…APAF, AQPE…APAL, and MPRS…APQA. 2 N-linked (GlcNAc...) asparagine glycosylation sites follow: Asn257 and Asn265. Asn548 carries an N-linked (GlcNAc...) asparagine glycan. The helical transmembrane segment at 698–718 threads the bilayer; that stretch reads VYLIIAICAVSSLLVLTLLLY. Residues 719–950 lie on the Cytoplasmic side of the membrane; it reads TALRCSAPPT…GNSTTDNSDQ (232 aa). 6 PXXP repeats span residues 734–737, 774–777, 799–802, 832–835, 873–876, and 891–894; these read PGKP, PSLP, PRQP, PGGP, PGNP, and PGSP. Residues 734-894 are 6 X 4 AA repeats of P-X-X-P; the sequence is PGKPTLVCSS…PDKFIIPGSP (161 aa). 2 disordered regions span residues 774 to 808 and 827 to 950; these read PSLP…DWRY and ILRA…NSDQ. Residues 787–800 show a composition bias toward basic and acidic residues; that stretch reads GQREEDSEGLKEPR. Positions 909–923 are enriched in basic and acidic residues; sequence DKSDFITFGKKEETK.

The protein resides in the cell membrane. Functionally, potential calcium-dependent cell-adhesion protein. May be involved in the establishment and maintenance of specific neuronal connections in the brain. This chain is Protocadherin alpha-13 (PCDHA13), found in Pan troglodytes (Chimpanzee).